The following is an 855-amino-acid chain: Suppressor of tumorigenicity 14 protein homolog (855 aa).

Residues 1–21 (MKSERARRGAGGSGDLGAGFK) are disordered. The Cytoplasmic segment spans residues 1-55 (MKSERARRGAGGSGDLGAGFKYTSRPENMNGCEEGVEFLPANNSSKVEKGGPRRW). Ser13 carries the phosphoserine modification. A helical; Signal-anchor for type II membrane protein transmembrane segment spans residues 56-76 (VVLMAVLAAFLALSLLAGLLA). The Extracellular portion of the chain corresponds to 77–855 (WHFQDRNVRV…RDWIKAQIGV (779 aa)). An SEA domain is found at 86-203 (VQKIFNGYLS…TSVVAFPSDP (118 aa)). Asn109 carries an N-linked (GlcNAc...) asparagine glycan. Cys214 and Cys244 are disulfide-bonded. 2 consecutive CUB domains span residues 214 to 334 (CSFA…FFQL) and 340 to 447 (CGGY…FLSF). Asn302 and Asn365 each carry an N-linked (GlcNAc...) asparagine glycan. Cystine bridges form between Cys340–Cys366, Cys397–Cys410, Cys453–Cys464, Cys459–Cys477, Cys471–Cys486, Cys488–Cys501, Cys496–Cys514, Cys508–Cys523, Cys525–Cys537, Cys532–Cys550, Cys544–Cys559, Cys567–Cys579, Cys574–Cys593, Cys587–Cys602, and Cys641–Cys657. LDL-receptor class A domains follow at residues 452–487 (PCPG…LDCK), 487–524 (KCNA…EGCS), 524–560 (SCPP…AKCQ), and 566–603 (PCTE…KDCD). N-linked (GlcNAc...) asparagine glycosylation is present at Asn489. Positions 615–854 (VVGGENSDQG…FRDWIKAQIG (240 aa)) constitute a Peptidase S1 domain. Catalysis depends on charge relay system residues His656 and Asp711. N-linked (GlcNAc...) asparagine glycosylation occurs at Asn772. Cystine bridges form between Cys776–Cys790 and Cys801–Cys830. Ser805 serves as the catalytic Charge relay system.

It belongs to the peptidase S1 family. As to quaternary structure, interacts with CDCP1. May interact with TMEFF1.

It localises to the membrane. The enzyme catalyses Cleaves various synthetic substrates with Arg or Lys at the P1 position and prefers small side-chain amino acids, such as Ala and Gly, at the P2 position.. In terms of biological role, exhibits trypsin-like activity as defined by cleavage of synthetic substrates with Arg or Lys as the P1 site. Involved in the terminal differentiation of keratinocytes through prostasin (PRSS8) activation and filaggrin (FLG) processing. Proteolytically cleaves and therefore activates TMPRSS13. This Bos taurus (Bovine) protein is Suppressor of tumorigenicity 14 protein homolog (ST14).